A 253-amino-acid polypeptide reads, in one-letter code: Claudin domain-containing protein 1 (253 aa).

Residues 5–25 (FATAFVIACVLSLISTIYMAA) traverse the membrane as a helical segment. 2 N-linked (GlcNAc...) asparagine glycosylation sites follow: N42 and N72. 3 helical membrane-spanning segments follow: residues 141–161 (FLLPFVSLGLMCFGALIGLCA), 175–195 (ILHLLAGLCTLGSVSCYVAGI), and 216–236 (FCLACVSAPLQFMAAALFIWA).

It belongs to the PMP-22/EMP/MP20 family. In the brain, highly expressed in endothelial cells of the cerebellum compared to other regions (at protein level).

Its subcellular location is the cell junction. The protein localises to the tight junction. It localises to the cell membrane. Its function is as follows. Plays a role in negatively regulating the permeability of cells to small molecules. In Mus musculus (Mouse), this protein is Claudin domain-containing protein 1 (Cldnd1).